Reading from the N-terminus, the 336-residue chain is Fructokinase-2 (336 aa).

It belongs to the carbohydrate kinase PfkB family. In terms of tissue distribution, expressed in stem, sheaths, anthers, and panicles (at protein level).

The catalysed reaction is D-fructose + ATP = D-fructose 6-phosphate + ADP + H(+). The protein operates within glycan biosynthesis; starch biosynthesis. Strongly inhibited at high fructose concentration. Functionally, may play an important role in maintaining the flux of carbon towards starch formation in endosperm. May also be involved in a sugar-sensing pathway. This chain is Fructokinase-2 (FRK2), found in Oryza sativa subsp. japonica (Rice).